Reading from the N-terminus, the 287-residue chain is Beta-lactamase GES-2 (287 aa).

Positions 1-18 (MRFIHALLLAGIAHSAYA) are cleaved as a signal peptide. C63 and C233 are oxidised to a cystine. The active-site Nucleophile; acyl-ester intermediate is S64. Positions 67, 125, and 161 each coordinate a beta-lactam.

Belongs to the class-A beta-lactamase family.

It catalyses the reaction a beta-lactam + H2O = a substituted beta-amino acid. With respect to regulation, inhibited by the beta-lactamase-blocking agents clavulanic acid, sulbactam and tazobactam. Extended-spectrum beta-lactamase (ESBL) which confers resistance to penicillins, as well as first, third and fourth-generation cephalosporins. Has modest carbapenem-hydrolyzing activity. Has cefotaxime-hydrolyzing activity. The sequence is that of Beta-lactamase GES-2 from Pseudomonas aeruginosa.